We begin with the raw amino-acid sequence, 507 residues long: MYRALRLLARSRRLLRVPSAGAAVSGEATTLPRCAPNVARMASQNSFRVEFDTFGELKVPTDKYYGAQTVRSTMNFKIGGATERMPIPVIQAFGILKRAAAEVNQEYGLDPKIASAIMKAADEVAEGKLNDHFPLVVWQTGSGTQTNMNVNEVISNRAIEMLGGELGSKKPVHPNDHVNKSQSSNDTFPTAMHIAAAVEVHKVLLPGLQKLHDALSAKSKEFAQVIKIGRTHTQDAVPLTLGQEFSGYVQQVQYAMVRIKAAMPRIYELAAGGTAVGTGLNTRIGFAEKVAAKVAALTGLPFVTAPNKFEALAAHDALVELSGAMNTAACSLMKIANDIRFLGSGPRSGLGELILPENEPGSSIMPGKVNPTQCEAMTMVAAQVMGNHVAVTVGGSNGHFELNVFKPMMIKNVLHSARLLGDASVSFTDNCVVGIQANTERINKLMNESLMLVTALNPHIGYDKAAKIAKTAHKNGSTLKETAIELGYLTAEQFDEWVKPKDMLGPK.

Residues 1–41 (MYRALRLLARSRRLLRVPSAGAAVSGEATTLPRCAPNVARM) constitute a mitochondrion transit peptide. K58, K63, and K77 each carry N6-acetyllysine; alternate. Residues K58, K63, and K77 each carry the N6-succinyllysine; alternate modification. T82 is modified (phosphothreonine). Residues K112 and K119 each carry the N6-acetyllysine; alternate modification. K112 and K119 each carry N6-succinyllysine; alternate. Residues 142 to 144 (SGT), 173 to 176 (HPND), and 183 to 185 (SSN) each bind substrate. N6-acetyllysine is present on K210. K220 is modified (N6-acetyllysine; alternate). Residue K220 is modified to N6-succinyllysine; alternate. Substrate is bound at residue T231. The active-site Proton donor/acceptor is the H232. T233 bears the Phosphothreonine mark. The residue at position 289 (K289) is an N6-acetyllysine; alternate. The residue at position 289 (K289) is an N6-succinyllysine; alternate. S362 is a catalytic residue. Substrate-binding positions include S363 and 368-370 (KVN). S363 is subject to Phosphoserine. K464 and K470 each carry N6-succinyllysine. Position 499 is an N6-acetyllysine (K499).

Belongs to the class-II fumarase/aspartase family. Fumarase subfamily. As to quaternary structure, homotetramer. Interacts with H2AZ1. Phosphorylation at Thr-233 by PRKDC in response to DNA damage promotes translocation to the nucleus and recruitment to DNA double-strand breaks (DSBs).

The protein resides in the mitochondrion. It localises to the cytoplasm. It is found in the cytosol. The protein localises to the nucleus. Its subcellular location is the chromosome. It carries out the reaction (S)-malate = fumarate + H2O. The protein operates within carbohydrate metabolism; tricarboxylic acid cycle; (S)-malate from fumarate: step 1/1. Functionally, catalyzes the reversible stereospecific interconversion of fumarate to L-malate. Experiments in different species have demonstrated that specific isoforms of this protein act in defined pathways and favor one direction over the other. Its function is as follows. Catalyzes the hydration of fumarate to L-malate in the tricarboxylic acid (TCA) cycle to facilitate a transition step in the production of energy in the form of NADH. Catalyzes the dehydration of L-malate to fumarate. Fumarate metabolism in the cytosol plays a role during urea cycle and arginine metabolism; fumarate being a by-product of the urea cycle and amino-acid catabolism. Also plays a role in DNA repair by promoting non-homologous end-joining (NHEJ). In response to DNA damage and phosphorylation by PRKDC, translocates to the nucleus and accumulates at DNA double-strand breaks (DSBs): acts by catalyzing formation of fumarate, an inhibitor of KDM2B histone demethylase activity, resulting in enhanced dimethylation of histone H3 'Lys-36' (H3K36me2). The polypeptide is Fumarate hydratase, mitochondrial (Mus musculus (Mouse)).